The primary structure comprises 143 residues: Small ribosomal subunit protein uS12 (143 aa).

The span at 1–20 shows a compositional bias: basic residues; sequence MGKPRGLRTARKHRSHRRDQ. The tract at residues 1 to 26 is disordered; it reads MGKPRGLRTARKHRSHRRDQRWHDKD. Hydroxyproline is present on Pro62.

This sequence belongs to the universal ribosomal protein uS12 family. In terms of assembly, component of the 40S small ribosomal subunit.

The protein localises to the cytoplasm. It is found in the cytosol. It localises to the rough endoplasmic reticulum. In Dermacentor variabilis (American dog tick), this protein is Small ribosomal subunit protein uS12 (RpS23).